The following is a 138-amino-acid chain: uncharacterized protein (138 aa).

Ser-110 carries the post-translational modification Phosphoserine.

Its subcellular location is the cytoplasm. It is found in the nucleus. This is an uncharacterized protein from Schizosaccharomyces pombe (strain 972 / ATCC 24843) (Fission yeast).